The sequence spans 520 residues: Maturase K (520 aa).

This sequence belongs to the intron maturase 2 family. MatK subfamily.

It localises to the plastid. The protein resides in the chloroplast. In terms of biological role, usually encoded in the trnK tRNA gene intron. Probably assists in splicing its own and other chloroplast group II introns. The protein is Maturase K of Ruscus aculeatus (Butcher's broom).